The chain runs to 1119 residues: DISARM protein DrmA (1119 aa).

The disordered stretch occupies residues 73–95; the sequence is PESGMEEDVEQQRNSELEQEAEE. Residues 813–986 form the Helicase C-terminal domain; sequence ELSKYIDPYR…ATPYASRARD (174 aa).

This sequence belongs to the helicase family.

It is found in the cytoplasm. Its function is as follows. Component of antiviral defense system DISARM (defense island system associated with restriction-modification), composed of DrmE, DrmA, DrmB, DrmC and DrmMII. DISARM is probably a multi-gene restriction module, this subunit is probably a helicase. Expression of DISARM in B.subtilis (strain BEST7003) confers resistance to phages Nf, phi29, phi105, phi3T, SPO1, SPR and SPP1. Protection is over 10(7)-fold against phi3T, 10(4)-10(5)-fold against Nf, phi29, phi105 and SPR, 100-fold against SPO1 and 10-fold against SPP1. DISARM does not interfere with phage adsorption, but instead interferes with (phi3T) DNA replication early in its cycle, preventing replication, circularization and lysogeny and probably causes phage DNA degradation (DNA is degraded in SPP1-infected cells). The sequence is that of DISARM protein DrmA from Bacillus paralicheniformis (strain ATCC 9945a / NCIMB 11709 / CD-2).